A 265-amino-acid polypeptide reads, in one-letter code: uncharacterized protein (265 aa).

2 consecutive CBS domains span residues 9–64 (MTKK…EKVE) and 67–126 (MTKR…TTPK).

This is an uncharacterized protein from Methanocaldococcus jannaschii (strain ATCC 43067 / DSM 2661 / JAL-1 / JCM 10045 / NBRC 100440) (Methanococcus jannaschii).